A 171-amino-acid polypeptide reads, in one-letter code: Adenine phosphoribosyltransferase (171 aa).

The protein belongs to the purine/pyrimidine phosphoribosyltransferase family. In terms of assembly, homodimer.

It is found in the cytoplasm. The enzyme catalyses AMP + diphosphate = 5-phospho-alpha-D-ribose 1-diphosphate + adenine. It participates in purine metabolism; AMP biosynthesis via salvage pathway; AMP from adenine: step 1/1. Catalyzes a salvage reaction resulting in the formation of AMP, that is energically less costly than de novo synthesis. The sequence is that of Adenine phosphoribosyltransferase from Methylococcus capsulatus (strain ATCC 33009 / NCIMB 11132 / Bath).